The following is a 284-amino-acid chain: L-ribulose-5-phosphate 3-epimerase UlaE (284 aa).

This sequence belongs to the L-ribulose-5-phosphate 3-epimerase family.

The catalysed reaction is L-ribulose 5-phosphate = L-xylulose 5-phosphate. It participates in cofactor degradation; L-ascorbate degradation; D-xylulose 5-phosphate from L-ascorbate: step 3/4. Functionally, catalyzes the isomerization of L-xylulose-5-phosphate to L-ribulose-5-phosphate. Is involved in the anaerobic L-ascorbate utilization. The polypeptide is L-ribulose-5-phosphate 3-epimerase UlaE (Shigella boydii serotype 18 (strain CDC 3083-94 / BS512)).